Reading from the N-terminus, the 485-residue chain is Aspartyl/glutamyl-tRNA(Asn/Gln) amidotransferase subunit B (485 aa).

Belongs to the GatB/GatE family. GatB subfamily. In terms of assembly, heterotrimer of A, B and C subunits.

The enzyme catalyses L-glutamyl-tRNA(Gln) + L-glutamine + ATP + H2O = L-glutaminyl-tRNA(Gln) + L-glutamate + ADP + phosphate + H(+). The catalysed reaction is L-aspartyl-tRNA(Asn) + L-glutamine + ATP + H2O = L-asparaginyl-tRNA(Asn) + L-glutamate + ADP + phosphate + 2 H(+). Functionally, allows the formation of correctly charged Asn-tRNA(Asn) or Gln-tRNA(Gln) through the transamidation of misacylated Asp-tRNA(Asn) or Glu-tRNA(Gln) in organisms which lack either or both of asparaginyl-tRNA or glutaminyl-tRNA synthetases. The reaction takes place in the presence of glutamine and ATP through an activated phospho-Asp-tRNA(Asn) or phospho-Glu-tRNA(Gln). The chain is Aspartyl/glutamyl-tRNA(Asn/Gln) amidotransferase subunit B from Bordetella petrii (strain ATCC BAA-461 / DSM 12804 / CCUG 43448).